Reading from the N-terminus, the 253-residue chain is Triosephosphate isomerase (253 aa).

9–11 is a substrate binding site; it reads NWK. The active-site Electrophile is the histidine 95. Glutamate 167 serves as the catalytic Proton acceptor. Substrate is bound by residues glycine 173, serine 213, and 234-235; that span reads GG. Serine 213 is modified (phosphoserine).

Belongs to the triosephosphate isomerase family. As to quaternary structure, homodimer.

It localises to the cytoplasm. The catalysed reaction is D-glyceraldehyde 3-phosphate = dihydroxyacetone phosphate. The protein operates within carbohydrate biosynthesis; gluconeogenesis. Its pathway is carbohydrate degradation; glycolysis; D-glyceraldehyde 3-phosphate from glycerone phosphate: step 1/1. Involved in the gluconeogenesis. Catalyzes stereospecifically the conversion of dihydroxyacetone phosphate (DHAP) to D-glyceraldehyde-3-phosphate (G3P). The polypeptide is Triosephosphate isomerase (Lysinibacillus sphaericus (strain C3-41)).